The primary structure comprises 47 residues: uncharacterized protein (47 aa).

Residues 2–47 (LRVRKRDGRLEEFSRAKIVRTCLRAGASKKIAEKVAEELKRGYTMG) enclose the ATP-cone domain.

This is an uncharacterized protein from Archaeoglobus fulgidus (strain ATCC 49558 / DSM 4304 / JCM 9628 / NBRC 100126 / VC-16).